Here is a 281-residue protein sequence, read N- to C-terminus: NADPH-dependent 7-cyano-7-deazaguanine reductase (281 aa).

86-88 (IES) serves as a coordination point for substrate. Residue 88–89 (SK) participates in NADPH binding. The active-site Thioimide intermediate is the Cys-189. Asp-196 serves as the catalytic Proton donor. 228–229 (HE) provides a ligand contact to substrate. 257–258 (RG) contributes to the NADPH binding site.

Belongs to the GTP cyclohydrolase I family. QueF type 2 subfamily. In terms of assembly, homodimer.

The protein localises to the cytoplasm. It carries out the reaction 7-aminomethyl-7-carbaguanine + 2 NADP(+) = 7-cyano-7-deazaguanine + 2 NADPH + 3 H(+). It participates in tRNA modification; tRNA-queuosine biosynthesis. Its function is as follows. Catalyzes the NADPH-dependent reduction of 7-cyano-7-deazaguanine (preQ0) to 7-aminomethyl-7-deazaguanine (preQ1). The polypeptide is NADPH-dependent 7-cyano-7-deazaguanine reductase (Mannheimia succiniciproducens (strain KCTC 0769BP / MBEL55E)).